The chain runs to 302 residues: UDP-N-acetylenolpyruvoylglucosamine reductase (302 aa).

The FAD-binding PCMH-type domain maps to 27 to 192 (KVGGAVDYLA…LSAKFALRPG (166 aa)). Arg171 is an active-site residue. The active-site Proton donor is Ser221. Glu291 is a catalytic residue.

The protein belongs to the MurB family. It depends on FAD as a cofactor.

Its subcellular location is the cytoplasm. The catalysed reaction is UDP-N-acetyl-alpha-D-muramate + NADP(+) = UDP-N-acetyl-3-O-(1-carboxyvinyl)-alpha-D-glucosamine + NADPH + H(+). It participates in cell wall biogenesis; peptidoglycan biosynthesis. Its function is as follows. Cell wall formation. In Streptococcus suis (strain 98HAH33), this protein is UDP-N-acetylenolpyruvoylglucosamine reductase.